A 446-amino-acid polypeptide reads, in one-letter code: Methanogenesis regulatory protein FilR1 (446 aa).

The Response regulatory domain occupies Asp-297–Ala-416. The residue at position 350 (Asp-350) is a 4-aspartylphosphate.

Phosphorylated by FilI.

Functionally, member of the two-component regulatory system FilI/FilRs, which is involved in the regulation of methanogenesis. Regulates its own expression, expression of the filI-filR2 operon, and of genes involved in methanogenesis such as acs1, acs4 and mtrABC. Acts by binding to the promoters. The sequence is that of Methanogenesis regulatory protein FilR1 from Methanothrix harundinacea (strain 6Ac) (Methanosaeta harundinacea).